The following is a 46-amino-acid chain: Esculentin-1R (46 aa).

Cys40 and Cys46 are disulfide-bonded.

Expressed by the skin glands.

It is found in the secreted. Its function is as follows. Shows antibacterial activity against representative Gram-negative and Gram-positive bacterial species, and hemolytic activity. This is Esculentin-1R from Pelophylax ridibundus (Marsh frog).